The sequence spans 163 residues: Nucleotide-binding protein Bcer98_0876 (163 aa).

This sequence belongs to the YajQ family.

Nucleotide-binding protein. This is Nucleotide-binding protein Bcer98_0876 from Bacillus cytotoxicus (strain DSM 22905 / CIP 110041 / 391-98 / NVH 391-98).